An 87-amino-acid polypeptide reads, in one-letter code: DNA-directed RNA polymerase subunit omega (87 aa).

This sequence belongs to the RNA polymerase subunit omega family. In terms of assembly, the RNAP catalytic core consists of 2 alpha, 1 beta, 1 beta' and 1 omega subunit. When a sigma factor is associated with the core the holoenzyme is formed, which can initiate transcription.

It carries out the reaction RNA(n) + a ribonucleoside 5'-triphosphate = RNA(n+1) + diphosphate. Its function is as follows. Promotes RNA polymerase assembly. Latches the N- and C-terminal regions of the beta' subunit thereby facilitating its interaction with the beta and alpha subunits. This is DNA-directed RNA polymerase subunit omega from Pseudomonas putida (strain W619).